Reading from the N-terminus, the 292-residue chain is Sulfofructosephosphate aldolase (292 aa).

The active-site Schiff-base intermediate with substrate is the lysine 193.

This sequence belongs to the aldolase LacD family. Homotetramer.

It carries out the reaction 6-deoxy-6-sulfo-D-fructose 1-phosphate = (2S)-3-sulfolactaldehyde + dihydroxyacetone phosphate. Functionally, cleaves 6-deoxy-6-sulfo-D-fructose 1-phosphate (SFP) to form dihydroxyacetone phosphate (DHAP) and 3-sulfolactaldehyde (SLA). Can also catalyze the reverse reaction. The protein is Sulfofructosephosphate aldolase (yihT) of Salmonella typhimurium (strain LT2 / SGSC1412 / ATCC 700720).